A 293-amino-acid chain; its full sequence is 4-hydroxy-tetrahydrodipicolinate synthase (293 aa).

Thr44 contacts pyruvate. Tyr132 (proton donor/acceptor) is an active-site residue. Residue Lys162 is the Schiff-base intermediate with substrate of the active site. Pyruvate is bound at residue Ile204.

It belongs to the DapA family. Homotetramer; dimer of dimers.

The protein localises to the cytoplasm. It catalyses the reaction L-aspartate 4-semialdehyde + pyruvate = (2S,4S)-4-hydroxy-2,3,4,5-tetrahydrodipicolinate + H2O + H(+). Its pathway is amino-acid biosynthesis; L-lysine biosynthesis via DAP pathway; (S)-tetrahydrodipicolinate from L-aspartate: step 3/4. Catalyzes the condensation of (S)-aspartate-beta-semialdehyde [(S)-ASA] and pyruvate to 4-hydroxy-tetrahydrodipicolinate (HTPA). The polypeptide is 4-hydroxy-tetrahydrodipicolinate synthase (Erythrobacter litoralis (strain HTCC2594)).